Reading from the N-terminus, the 173-residue chain is Nuclear transcription factor Y subunit B-8 (173 aa).

The tract at residues 1–30 (MAESQAKSPGGCGSHESGGDQSPRSLHVRE) is disordered. The residue at position 2 (Ala2) is an N-acetylalanine. A DNA-binding region spans residues 35 to 41 (LPIANIS). The subunit association domain (SAD) stretch occupies residues 62–73 (VQECVSEFISFV). A disordered region spans residues 123 to 173 (DTKGSAKGGDPNAKKDGQSSQNGQFSQLAHQGPYGNSQAQQHMMVPMPGTD). A compositionally biased stretch (polar residues) spans 140–163 (QSSQNGQFSQLAHQGPYGNSQAQQ).

Belongs to the NFYB/HAP3 subunit family. In terms of assembly, heterotrimeric transcription factor composed of three components, NF-YA, NF-YB and NF-YC. NF-YB and NF-YC must interact and dimerize for NF-YA association and DNA binding. Expressed in flowers and mature rosettes.

Its subcellular location is the nucleus. In terms of biological role, component of the NF-Y/HAP transcription factor complex. The NF-Y complex stimulates the transcription of various genes by recognizing and binding to a CCAAT motif in promoters. This is Nuclear transcription factor Y subunit B-8 (NFYB8) from Arabidopsis thaliana (Mouse-ear cress).